The following is a 169-amino-acid chain: Small ribosomal subunit protein bS16 (169 aa).

Residues 114–169 form a disordered region; it reads AEGPTAEAITEKRRKAKEEAEAKAAAEAEAAEKAEAEAAEKAAAEAAEESEEASAE. Residues 129-156 show a composition bias toward basic and acidic residues; sequence AKEEAEAKAAAEAEAAEKAEAEAAEKAA. A compositionally biased stretch (acidic residues) spans 159–169; that stretch reads AAEESEEASAE.

This sequence belongs to the bacterial ribosomal protein bS16 family.

The chain is Small ribosomal subunit protein bS16 from Corynebacterium urealyticum (strain ATCC 43042 / DSM 7109).